The chain runs to 69 residues: DNA gyrase inhibitor YacG (69 aa).

Residues cysteine 14, cysteine 17, cysteine 33, and cysteine 37 each contribute to the Zn(2+) site. Residues 46–69 are disordered; that stretch reads ADEEKSIPGAPDMSDSDGWSEDQY. Residues 59–69 show a composition bias toward acidic residues; the sequence is SDSDGWSEDQY.

Belongs to the DNA gyrase inhibitor YacG family. In terms of assembly, interacts with GyrB. Zn(2+) is required as a cofactor.

Its function is as follows. Inhibits all the catalytic activities of DNA gyrase by preventing its interaction with DNA. Acts by binding directly to the C-terminal domain of GyrB, which probably disrupts DNA binding by the gyrase. The chain is DNA gyrase inhibitor YacG from Aliivibrio fischeri (strain ATCC 700601 / ES114) (Vibrio fischeri).